A 553-amino-acid polypeptide reads, in one-letter code: Urocanate hydratase (553 aa).

Residues Gly-51–Gly-52, Gln-129, Gly-175–Gly-177, Glu-195, Arg-200, Asn-241–Ala-242, Gln-262–His-266, Tyr-272–Leu-273, and Tyr-321 each bind NAD(+). Residue Cys-409 is part of the active site. NAD(+) is bound at residue Gly-491.

It belongs to the urocanase family. The cofactor is NAD(+).

It is found in the cytoplasm. It catalyses the reaction 4-imidazolone-5-propanoate = trans-urocanate + H2O. It functions in the pathway amino-acid degradation; L-histidine degradation into L-glutamate; N-formimidoyl-L-glutamate from L-histidine: step 2/3. Functionally, catalyzes the conversion of urocanate to 4-imidazolone-5-propionate. This chain is Urocanate hydratase, found in Sphingopyxis alaskensis (strain DSM 13593 / LMG 18877 / RB2256) (Sphingomonas alaskensis).